Reading from the N-terminus, the 2003-residue chain is Neurogenic locus notch homolog protein 4 (2003 aa).

The signal sequence occupies residues 1–23; it reads MQPPSLLLLLLLLLLLCVSVVRP. EGF-like domains lie at 24–63, 64–115, 118–155, and 156–192; these read RGLL…ETCQ, FPDP…ERCQ, LEDP…EQCQ, and LRDF…HACE. At 24–1447 the chain is on the extracellular side; that stretch reads RGLLCGSFPE…TAPPANQLPW (1424 aa). Cystine bridges form between cysteine 28/cysteine 41, cysteine 35/cysteine 51, cysteine 53/cysteine 62, cysteine 68/cysteine 80, cysteine 74/cysteine 103, cysteine 105/cysteine 114, cysteine 122/cysteine 133, cysteine 127/cysteine 143, cysteine 145/cysteine 154, cysteine 160/cysteine 171, cysteine 165/cysteine 180, cysteine 182/cysteine 191, cysteine 198/cysteine 211, cysteine 205/cysteine 220, cysteine 222/cysteine 231, cysteine 238/cysteine 249, cysteine 243/cysteine 262, cysteine 264/cysteine 273, cysteine 280/cysteine 291, cysteine 285/cysteine 300, cysteine 302/cysteine 311, cysteine 318/cysteine 332, cysteine 326/cysteine 341, cysteine 343/cysteine 352, cysteine 359/cysteine 370, cysteine 364/cysteine 379, cysteine 381/cysteine 390, cysteine 396/cysteine 407, cysteine 401/cysteine 418, cysteine 420/cysteine 429, cysteine 436/cysteine 452, cysteine 446/cysteine 461, cysteine 463/cysteine 472, cysteine 479/cysteine 490, cysteine 484/cysteine 499, cysteine 501/cysteine 510, cysteine 517/cysteine 528, cysteine 522/cysteine 537, cysteine 539/cysteine 548, cysteine 555/cysteine 566, cysteine 560/cysteine 575, cysteine 577/cysteine 586, cysteine 593/cysteine 604, cysteine 598/cysteine 613, cysteine 615/cysteine 624, cysteine 629/cysteine 640, cysteine 634/cysteine 649, and cysteine 651/cysteine 658. The EGF-like 5; calcium-binding domain maps to 194 to 232; it reads DVNECFQDPGPCPKGTSCHNTLGSFQCLCPVGQEGPRCE. An EGF-like 6 domain is found at 234–274; sequence RAGPCPPRGCSNGGTCQLMPEKDSTFHLCLCPPGFIGPDCE. The 37-residue stretch at 276 to 312 folds into the EGF-like 7; calcium-binding domain; sequence NPDNCVSHQCQNGGTCQDGLDTYTCLCPETWTGWDCS. An EGF-like 8; calcium-binding domain is found at 314–353; it reads DVDECETQGPPHCRNGGTCQNSAGSFHCVCVSGWGGTSCE. The region spanning 355 to 391 is the EGF-like 9; calcium-binding domain; sequence NLDDCIAATCAPGSTCIDRVGSFSCLCPPGRTGLLCH. One can recognise an EGF-like 10 domain in the interval 392–430; the sequence is LEDMCLSQPCHGDAQCSTNPLTGSTLCLCQPGYSGPTCH. The EGF-like 11; calcium-binding domain occupies 432 to 473; the sequence is DLDECLMAQQGPSPCEHGGSCLNTPGSFNCLCPPGYTGSRCE. Residues 475 to 511 form the EGF-like 12; calcium-binding domain; it reads DHNECLSQPCHPGSTCLDLLATFHCLCPPGLEGQLCE. An EGF-like 13; calcium-binding domain is found at 513–549; it reads ETNECASAPCLNHADCHDLLNGFQCICLPGFSGTRCE. The 37-residue stretch at 551 to 587 folds into the EGF-like 14; calcium-binding domain; sequence DIDECRSSPCANGGQCQDQPGAFHCKCLPGFEGPRCQ. The 37-residue stretch at 589-625 folds into the EGF-like 15; calcium-binding domain; sequence EVDECLSDPCPVGASCLDLPGAFFCLCPSGFTGQLCE. 14 consecutive EGF-like domains span residues 626 to 659, 661 to 689, 691 to 727, 729 to 765, 767 to 803, 806 to 842, 844 to 880, 882 to 928, 930 to 966, 968 to 1004, 1006 to 1044, 1046 to 1085, 1087 to 1126, and 1130 to 1171; these read VPLC…PGCA, PEDN…PECE, ELGG…PTCS, EMTA…PQCQ, STDY…PRCE, LRPS…GSCQ, LMDL…PLCN, PLSS…SLCQ, HVNP…QNCS, ELDA…LRCE, DVDE…QWCE, EIDP…PTCS, RAPS…PDCL, and APKG…PRCQ. Asparagine 664 is a glycosylation site (N-linked (GlcNAc...) asparagine). Intrachain disulfides connect cysteine 665/cysteine 672, cysteine 667/cysteine 677, cysteine 679/cysteine 688, cysteine 695/cysteine 706, cysteine 700/cysteine 715, cysteine 717/cysteine 726, cysteine 733/cysteine 744, cysteine 738/cysteine 753, cysteine 755/cysteine 764, cysteine 771/cysteine 782, cysteine 776/cysteine 791, cysteine 793/cysteine 802, cysteine 810/cysteine 821, cysteine 815/cysteine 830, cysteine 832/cysteine 841, cysteine 848/cysteine 859, cysteine 853/cysteine 868, cysteine 870/cysteine 879, cysteine 886/cysteine 907, cysteine 901/cysteine 916, cysteine 918/cysteine 927, cysteine 934/cysteine 945, cysteine 939/cysteine 954, cysteine 956/cysteine 965, cysteine 972/cysteine 983, cysteine 977/cysteine 992, cysteine 994/cysteine 1003, cysteine 1010/cysteine 1023, cysteine 1015/cysteine 1032, cysteine 1034/cysteine 1043, cysteine 1050/cysteine 1061, cysteine 1055/cysteine 1073, cysteine 1075/cysteine 1084, cysteine 1091/cysteine 1102, cysteine 1096/cysteine 1114, cysteine 1116/cysteine 1125, cysteine 1134/cysteine 1146, cysteine 1140/cysteine 1159, cysteine 1161/cysteine 1170, cysteine 1178/cysteine 1191, cysteine 1187/cysteine 1203, cysteine 1214/cysteine 1238, cysteine 1220/cysteine 1233, cysteine 1229/cysteine 1245, cysteine 1251/cysteine 1277, cysteine 1259/cysteine 1272, and cysteine 1268/cysteine 1284. Asparagine 714 is a glycosylation site (N-linked (GlcNAc...) asparagine). N-linked (GlcNAc...) asparagine glycosylation is present at asparagine 964. The N-linked (GlcNAc...) asparagine glycan is linked to asparagine 1143. 3 LNR repeats span residues 1170–1213, 1214–1250, and 1251–1294; these read CQKP…PWKG, CPSH…TPPA, and CTPA…PEWG. A disordered region spans residues 1347–1371; sequence AEEKLGGTRDPTYQERAAPQTQPLG. A helical transmembrane segment spans residues 1448-1468; that stretch reads PVLCSPVAGVILLALGALLVL. Topologically, residues 1469–2003 are cytoplasmic; sequence QLIRRRRREH…PINQGGEGKK (535 aa). Residues 1485-1508 are disordered; sequence PGFTRRPRTQSAPHRRRPPLGEDS. The segment covering 1489-1502 has biased composition (basic residues); the sequence is RRPRTQSAPHRRRP. ANK repeat units lie at residues 1633–1665, 1666–1698, 1700–1732, 1733–1765, and 1766–1798; these read TGET…QPDR, AGRT…DART, DGTT…ARDK, WGKT…AQDN, and REQT…LRDQ. 2 disordered regions span residues 1900–1927 and 1968–2003; these read LSGV…RPNP and PPPC…EGKK.

It belongs to the NOTCH family. Heterodimer of a C-terminal fragment N(TM) and a N-terminal fragment N(EC) which are probably linked by disulfide bonds. Interacts with MAML1, MAML2 and MAML3 which act as transcriptional coactivators for NOTCH4. As to quaternary structure, (Microbial infection) Interacts with Epstein-Barr virus (EBV) RK-BARF0. In terms of processing, synthesized in the endoplasmic reticulum as an inactive form which is proteolytically cleaved by a furin-like convertase in the trans-Golgi network before it reaches the plasma membrane to yield an active, ligand-accessible form. Cleavage results in a C-terminal fragment N(TM) and a N-terminal fragment N(EC). Following ligand binding, it is cleaved by TNF-alpha converting enzyme (TACE) to yield a membrane-associated intermediate fragment called notch extracellular truncation (NEXT). This fragment is then cleaved by presenilin dependent gamma-secretase to release a notch-derived peptide containing the intracellular domain (NICD) from the membrane. Phosphorylated. Highly expressed in the heart, moderately in the lung and placenta and at low levels in the liver, skeletal muscle, kidney, pancreas, spleen, lymph node, thymus, bone marrow and fetal liver. No expression was seen in adult brain or peripheral blood leukocytes.

The protein localises to the cell membrane. Its subcellular location is the nucleus. In terms of biological role, functions as a receptor for membrane-bound ligands Jagged1, Jagged2 and Delta1 to regulate cell-fate determination. Upon ligand activation through the released notch intracellular domain (NICD) it forms a transcriptional activator complex with RBPJ/RBPSUH and activates genes of the enhancer of split locus. Affects the implementation of differentiation, proliferation and apoptotic programs. May regulate branching morphogenesis in the developing vascular system. In Homo sapiens (Human), this protein is Neurogenic locus notch homolog protein 4.